The following is a 479-amino-acid chain: Sulfate adenylyltransferase subunit 1 (479 aa).

Residues 22–238 (KDMLRFLTCG…DSMDISKEPK (217 aa)) enclose the tr-type G domain. The tract at residues 31 to 38 (GSVDDGKS) is G1. 31 to 38 (GSVDDGKS) contacts GTP. The segment at 89-93 (GITID) is G2. Residues 110 to 113 (DTPG) are G3. GTP-binding positions include 110–114 (DTPGH) and 165–168 (NKMD). A G4 region spans residues 165 to 168 (NKMD). The G5 stretch occupies residues 202–204 (SAL).

Belongs to the TRAFAC class translation factor GTPase superfamily. Classic translation factor GTPase family. CysN/NodQ subfamily. In terms of assembly, heterodimer composed of CysD, the smaller subunit, and CysN.

The enzyme catalyses sulfate + ATP + H(+) = adenosine 5'-phosphosulfate + diphosphate. It functions in the pathway sulfur metabolism; hydrogen sulfide biosynthesis; sulfite from sulfate: step 1/3. Its function is as follows. With CysD forms the ATP sulfurylase (ATPS) that catalyzes the adenylation of sulfate producing adenosine 5'-phosphosulfate (APS) and diphosphate, the first enzymatic step in sulfur assimilation pathway. APS synthesis involves the formation of a high-energy phosphoric-sulfuric acid anhydride bond driven by GTP hydrolysis by CysN coupled to ATP hydrolysis by CysD. The sequence is that of Sulfate adenylyltransferase subunit 1 from Sulfurovum sp. (strain NBC37-1).